The following is a 185-amino-acid chain: ATP synthase subunit delta, chloroplastic (185 aa).

The protein belongs to the ATPase delta chain family. In terms of assembly, F-type ATPases have 2 components, F(1) - the catalytic core - and F(0) - the membrane proton channel. F(1) has five subunits: alpha(3), beta(3), gamma(1), delta(1), epsilon(1). CF(0) has four main subunits: a(1), b(1), b'(1) and c(10-14). The alpha and beta chains form an alternating ring which encloses part of the gamma chain. F(1) is attached to F(0) by a central stalk formed by the gamma and epsilon chains, while a peripheral stalk is formed by the delta, b and b' chains.

The protein resides in the plastid. It is found in the chloroplast thylakoid membrane. Functionally, f(1)F(0) ATP synthase produces ATP from ADP in the presence of a proton or sodium gradient. F-type ATPases consist of two structural domains, F(1) containing the extramembraneous catalytic core and F(0) containing the membrane proton channel, linked together by a central stalk and a peripheral stalk. During catalysis, ATP synthesis in the catalytic domain of F(1) is coupled via a rotary mechanism of the central stalk subunits to proton translocation. This protein is part of the stalk that links CF(0) to CF(1). It either transmits conformational changes from CF(0) to CF(1) or is implicated in proton conduction. This is ATP synthase subunit delta, chloroplastic from Gracilaria tenuistipitata var. liui (Red alga).